Reading from the N-terminus, the 515-residue chain is Bifunctional purine biosynthesis protein PurH (515 aa).

Residues 1-145 (MTKRVLISVS…KNHASVTVVV (145 aa)) form the MGS-like domain.

It belongs to the PurH family.

It catalyses the reaction (6R)-10-formyltetrahydrofolate + 5-amino-1-(5-phospho-beta-D-ribosyl)imidazole-4-carboxamide = 5-formamido-1-(5-phospho-D-ribosyl)imidazole-4-carboxamide + (6S)-5,6,7,8-tetrahydrofolate. It carries out the reaction IMP + H2O = 5-formamido-1-(5-phospho-D-ribosyl)imidazole-4-carboxamide. The protein operates within purine metabolism; IMP biosynthesis via de novo pathway; 5-formamido-1-(5-phospho-D-ribosyl)imidazole-4-carboxamide from 5-amino-1-(5-phospho-D-ribosyl)imidazole-4-carboxamide (10-formyl THF route): step 1/1. Its pathway is purine metabolism; IMP biosynthesis via de novo pathway; IMP from 5-formamido-1-(5-phospho-D-ribosyl)imidazole-4-carboxamide: step 1/1. The protein is Bifunctional purine biosynthesis protein PurH of Streptococcus pneumoniae (strain JJA).